Here is a 144-residue protein sequence, read N- to C-terminus: Leghemoglobin-1 (144 aa).

The Globin domain occupies 2–144; sequence GFTEKQEALV…DGLATAIKAA (143 aa). 2 positions are modified to nitrated tyrosine: Tyr25 and Tyr30. Residue Ser45 coordinates heme b. A Phosphoserine modification is found at Ser45. Position 62 (His62) interacts with O2. Heme b-binding residues include Lys65, His93, and Lys96. Nitrated tyrosine is present on Tyr134.

Belongs to the plant globin family. As to quaternary structure, monomer. In terms of processing, nitrated in effective nodules and particularly in hypoxic conditions; this mechanism may play a protective role in the symbiosis by buffering toxic peroxynitrite NO(2)(-). Nitration level decrease during nodule senescence. Phosphorylation at Ser-45 disrupts the molecular environment of its porphyrin ring oxygen binding pocket, thus leading to a reduced oxygen consumption and to the delivery of oxygen O(2) to symbiosomes. Root nodules.

Its subcellular location is the cytoplasm. It is found in the cytosol. The protein resides in the nucleus. Functionally, leghemoglobin that reversibly binds oxygen O(2) through a pentacoordinated heme iron. In root nodules, facilitates the diffusion of oxygen to the bacteroids while preventing the bacterial nitrogenase from being inactivated by buffering dioxygen, nitric oxide and carbon monoxide, and promoting the formation of reactive oxygen species (ROS, e.g. H(2)O(2)). This role is essential for symbiotic nitrogen fixation (SNF). In Vicia faba (Broad bean), this protein is Leghemoglobin-1.